The chain runs to 307 residues: MNHATSELHDESAVSIVPETTRLQDLSALVKMGIVNSNTLTVFTGFWLALHFNGLSVMDNLDKLFFTIVGSALIMAGVCCLNNYIDRDIDPLMERTKNRPTVTGKYKPGFALAFGLVILLLGFVFLLLTTPMAVLISFIGAFTYVVLYTLWTKRKYTLNTVVGSISGAVPPLIGWAAIDPSLNHPIAWMLFLIMFIWQIPHFLALAMKRVDEYRNAGIPMLPVVQGFDITKRQIMIWTVCLLPLPFYMSGLGITFMVIATLLNIGWIALGLYGFRQQDDIKWSVKMFVYSLNYLTILFVSMIVVTFF.

The next 8 helical transmembrane spans lie at 32-52, 65-85, 108-128, 131-151, 158-178, 186-206, 251-271, and 287-307; these read MGIV…ALHF, FFTI…NNYI, PGFA…FLLL, PMAV…YTLW, LNTV…WAAI, IAWM…LALA, LGIT…ALGL, and FVYS…VTFF.

Belongs to the UbiA prenyltransferase family. Protoheme IX farnesyltransferase subfamily. As to quaternary structure, interacts with CtaA.

Its subcellular location is the cell membrane. The enzyme catalyses heme b + (2E,6E)-farnesyl diphosphate + H2O = Fe(II)-heme o + diphosphate. It functions in the pathway porphyrin-containing compound metabolism; heme O biosynthesis; heme O from protoheme: step 1/1. Its function is as follows. Converts heme B (protoheme IX) to heme O by substitution of the vinyl group on carbon 2 of heme B porphyrin ring with a hydroxyethyl farnesyl side group. The sequence is that of Protoheme IX farnesyltransferase from Bacillus mycoides (strain KBAB4) (Bacillus weihenstephanensis).